Consider the following 598-residue polypeptide: Terpenoid synthase 1 (598 aa).

Positions 362, 366, 494, and 502 each coordinate Mg(2+). Residues 362 to 366 carry the DDXXD motif motif; that stretch reads DDTCD.

The protein belongs to the terpene synthase family. Tpsa subfamily. The cofactor is Mg(2+). Mn(2+) serves as cofactor. Expressed exclusively in siliques.

Its subcellular location is the cytoplasm. The protein operates within secondary metabolite biosynthesis; terpenoid biosynthesis. The sequence is that of Terpenoid synthase 1 (TPS01) from Arabidopsis thaliana (Mouse-ear cress).